The following is a 366-amino-acid chain: MADNSSDYRALFLNDVPMMDARAPVEFSKGAFPGVINLPLMNDIERQKVGTCYKQHGQDAAIQLGHQLVCGQVKDERVNAWVEFAKANPDGYLYCFRGGLRSQTVQRWLKDAGVDYPRIIGGYKAMRTFLLDTLHEAVSECDIVVLGGMTSTGKTEVLTQLRNSLDLEGIANHRGSSFGKRATGQPAQIDFENRLAIDLLKKRAAGIEQFVVEDESRLVGSCNVPLELHQTMQGCPMVWLEDSFENRVERILDDYVINLCAEFITVKGEEQGFGLFAERLLQSLNNIHKRLGGERHQRLSGLMQTALEEQQRSGTVDLHRGWIEGLLGEYYDPMYAYQREHKAARIEFAGNQVDVLDYLRERSDKR.

One can recognise a Rhodanese domain in the interval 12 to 135 (FLNDVPMMDA…MRTFLLDTLH (124 aa)). Catalysis depends on Cys95, which acts as the S-selanylcysteine intermediate.

Belongs to the SelU family. As to quaternary structure, monomer.

The catalysed reaction is 5-methylaminomethyl-2-thiouridine(34) in tRNA + selenophosphate + (2E)-geranyl diphosphate + H2O + H(+) = 5-methylaminomethyl-2-selenouridine(34) in tRNA + (2E)-thiogeraniol + phosphate + diphosphate. It catalyses the reaction 5-methylaminomethyl-2-thiouridine(34) in tRNA + (2E)-geranyl diphosphate = 5-methylaminomethyl-S-(2E)-geranyl-thiouridine(34) in tRNA + diphosphate. It carries out the reaction 5-methylaminomethyl-S-(2E)-geranyl-thiouridine(34) in tRNA + selenophosphate + H(+) = 5-methylaminomethyl-2-(Se-phospho)selenouridine(34) in tRNA + (2E)-thiogeraniol. The enzyme catalyses 5-methylaminomethyl-2-(Se-phospho)selenouridine(34) in tRNA + H2O = 5-methylaminomethyl-2-selenouridine(34) in tRNA + phosphate. Functionally, involved in the post-transcriptional modification of the uridine at the wobble position (U34) of tRNA(Lys), tRNA(Glu) and tRNA(Gln). Catalyzes the conversion of 2-thiouridine (S2U-RNA) to 2-selenouridine (Se2U-RNA). Acts in a two-step process involving geranylation of 2-thiouridine (S2U) to S-geranyl-2-thiouridine (geS2U) and subsequent selenation of the latter derivative to 2-selenouridine (Se2U) in the tRNA chain. The sequence is that of tRNA 2-selenouridine synthase from Pseudomonas savastanoi pv. phaseolicola (strain 1448A / Race 6) (Pseudomonas syringae pv. phaseolicola (strain 1448A / Race 6)).